A 110-amino-acid polypeptide reads, in one-letter code: UPF0102 protein Abu_0255 (110 aa).

The protein belongs to the UPF0102 family.

This chain is UPF0102 protein Abu_0255, found in Aliarcobacter butzleri (strain RM4018) (Arcobacter butzleri).